Reading from the N-terminus, the 1068-residue chain is Protein AF-10 (1068 aa).

The segment at Ile-22 to Gln-74 adopts a PHD-type 1 zinc-finger fold. The segment at Arg-79–Val-112 adopts a C2HC pre-PHD-type zinc-finger fold. The segment at Val-80–Ala-287 is self-association. The required for interaction with histone H3 stretch occupies residues Ala-106–Tyr-190. The segment at Lys-135–Phe-198 adopts a PHD-type 2 zinc-finger fold. The interval Asp-141–Lys-233 is interaction with FSTL3. The tract at residues Arg-206–Thr-260 is disordered. Residues Ser-211 to His-222 are compositionally biased toward low complexity. At Ser-217 the chain carries Phosphoserine. Basic and acidic residues predominate over residues Ser-223–Lys-240. Ser-252 bears the Phosphoserine mark. Lys-280 participates in a covalent cross-link: Glycyl lysine isopeptide (Lys-Gly) (interchain with G-Cter in SUMO2). Positions Asn-291–Lys-305 are enriched in polar residues. A disordered region spans residues Asn-291–Ala-505. Over residues Asp-306–Gly-317 the composition is skewed to basic and acidic residues. Positions Arg-311–Leu-674 are DNA-binding. Positions Ser-352 to Gln-372 are enriched in low complexity. 2 stretches are compositionally biased toward polar residues: residues Tyr-387–Thr-396 and Ser-404–Pro-446. Phosphoserine is present on Ser-436. A compositionally biased stretch (basic residues) spans Glu-465–Gly-483. Over residues Val-490–Ala-505 the composition is skewed to low complexity. Phosphoserine is present on Ser-532. A compositionally biased stretch (low complexity) spans Ser-583 to Ser-594. Disordered regions lie at residues Ser-583–Pro-612 and Asn-660–Asn-708. Composition is skewed to polar residues over residues His-595–Leu-604 and Asn-660–Asn-673. The segment covering Leu-674 to Leu-694 has biased composition (low complexity). 3 positions are modified to phosphoserine: Ser-684, Ser-686, and Ser-689. Residues Asn-703–Thr-784 form a transactivation domain; required for DOT1L-binding region. The tract at residues Leu-750–Leu-778 is leucine-zipper. The segment covering Ala-800–Ser-814 has biased composition (polar residues). The tract at residues Ala-800–Ser-865 is disordered. 2 stretches are compositionally biased toward low complexity: residues Leu-834 to Ser-848 and Gln-855 to Ser-865.

Self-associates. Interacts with FSTL3 isoform 2; the interaction enhances MLLT10 in vitro transcriptional activity and self-association. Interacts with YEATS4. Interacts with SS18. Interacts with DOT1L; this interaction also occurs with the KMT2A/MLL1 fusion protein. Interacts with histone H3; interaction is necessary for MLLT10 binding to nucleosomes; interaction is inhibited by histone H3 'Lys-27' methylations (H3K27me1, H3K27me2 and H3K27me3) amd acetylation; interaction stabilizes association of MLLT10 at chromatin; interaction is essential for histone H3 'Lys-79' dimethylation (H3K79me2). In terms of tissue distribution, expressed abundantly in testis.

The protein resides in the nucleus. In terms of biological role, probably involved in transcriptional regulation. In vitro or as fusion protein with KMT2A/MLL1 has transactivation activity. Binds to cruciform DNA. In cells, binding to unmodified histone H3 regulates DOT1L functions including histone H3 'Lys-79' dimethylation (H3K79me2) and gene activation. This is Protein AF-10 from Homo sapiens (Human).